A 360-amino-acid polypeptide reads, in one-letter code: 3-dehydroquinate synthase (360 aa).

Residues D69–K74, G103–D107, T127–T128, K140, K149, and C167–T170 contribute to the NAD(+) site. Residues E182, H245, and H262 each coordinate Zn(2+).

This sequence belongs to the sugar phosphate cyclases superfamily. Dehydroquinate synthase family. Requires Co(2+) as cofactor. The cofactor is Zn(2+). NAD(+) is required as a cofactor.

It is found in the cytoplasm. The catalysed reaction is 7-phospho-2-dehydro-3-deoxy-D-arabino-heptonate = 3-dehydroquinate + phosphate. It participates in metabolic intermediate biosynthesis; chorismate biosynthesis; chorismate from D-erythrose 4-phosphate and phosphoenolpyruvate: step 2/7. In terms of biological role, catalyzes the conversion of 3-deoxy-D-arabino-heptulosonate 7-phosphate (DAHP) to dehydroquinate (DHQ). In Aeromonas hydrophila subsp. hydrophila (strain ATCC 7966 / DSM 30187 / BCRC 13018 / CCUG 14551 / JCM 1027 / KCTC 2358 / NCIMB 9240 / NCTC 8049), this protein is 3-dehydroquinate synthase.